A 434-amino-acid polypeptide reads, in one-letter code: Enolase (434 aa).

Gln167 lines the (2R)-2-phosphoglycerate pocket. Glu209 serves as the catalytic Proton donor. Positions 246, 291, and 318 each coordinate Mg(2+). The (2R)-2-phosphoglycerate site is built by Lys343, Arg372, Ser373, and Lys394. Catalysis depends on Lys343, which acts as the Proton acceptor.

It belongs to the enolase family. In terms of assembly, component of the RNA degradosome, a multiprotein complex involved in RNA processing and mRNA degradation. Requires Mg(2+) as cofactor.

The protein localises to the cytoplasm. Its subcellular location is the secreted. The protein resides in the cell surface. It catalyses the reaction (2R)-2-phosphoglycerate = phosphoenolpyruvate + H2O. It participates in carbohydrate degradation; glycolysis; pyruvate from D-glyceraldehyde 3-phosphate: step 4/5. Catalyzes the reversible conversion of 2-phosphoglycerate (2-PG) into phosphoenolpyruvate (PEP). It is essential for the degradation of carbohydrates via glycolysis. The chain is Enolase from Buchnera aphidicola subsp. Acyrthosiphon pisum (strain APS) (Acyrthosiphon pisum symbiotic bacterium).